A 500-amino-acid chain; its full sequence is Probable zinc metalloprotease MGYG_02393 (500 aa).

The N-terminal stretch at 1 to 24 (MHLSMGGLLPGLALLASANALALA) is a signal peptide. Residues Asn61, Asn103, and Asn124 are each glycosylated (N-linked (GlcNAc...) asparagine). Residues His174, Asp194, and Glu230 each contribute to the Zn(2+) site. Asn245 carries N-linked (GlcNAc...) asparagine glycosylation. Residue Asp257 coordinates Zn(2+). The region spanning 414–500 (MPRNVRVNTS…ERGVAVLPFP (87 aa)) is the Fibronectin type-III domain. 2 N-linked (GlcNAc...) asparagine glycosylation sites follow: Asn421 and Asn427.

It belongs to the peptidase M28 family. M28B subfamily. Requires Zn(2+) as cofactor.

The protein localises to the secreted. The protein is Probable zinc metalloprotease MGYG_02393 of Arthroderma gypseum (strain ATCC MYA-4604 / CBS 118893) (Microsporum gypseum).